Consider the following 513-residue polypeptide: Sucrose transport protein SUC1 (513 aa).

Residues Met1 to Lys11 show a composition bias toward basic and acidic residues. Residues Met1 to Gln26 are disordered. At Met1 to Lys32 the chain is on the cytoplasmic side. The residue at position 20 (Ser20) is a Phosphoserine. Residues Ile33 to Leu53 form a helical membrane-spanning segment. Residues Leu54–Trp67 lie on the Extracellular side of the membrane. Residues Ser68 to Phe88 form a helical membrane-spanning segment. Residues His89–Arg101 lie on the Cytoplasmic side of the membrane. The chain crosses the membrane as a helical span at residues Pro102–Ala122. The Extracellular portion of the chain corresponds to Asp123–Arg139. Residues Ala140–Gly160 traverse the membrane as a helical segment. At Pro161–Arg178 the chain is on the cytoplasmic side. The helical transmembrane segment at Val179–Gly199 threads the bilayer. The Extracellular segment spans residues Ser200–Lys224. The chain crosses the membrane as a helical span at residues Thr225–Val245. Over Asn246 to Pro282 the chain is Cytoplasmic. The helical transmembrane segment at Met283 to Phe303 threads the bilayer. Residues Asp304–Gly334 are Extracellular-facing. The chain crosses the membrane as a helical span at residues Ala335–Ile355. Over Gly356–Leu365 the chain is Cytoplasmic. Residues Trp366 to Phe386 form a helical membrane-spanning segment. At Ala387 to Ala408 the chain is on the extracellular side. The helical transmembrane segment at Leu409–Leu429 threads the bilayer. The Cytoplasmic segment spans residues Ala430–Gln441. A helical membrane pass occupies residues Gly442 to Gly462. Residues Gly463–Asn474 are Extracellular-facing. The helical transmembrane segment at Leu475 to Val495 threads the bilayer. At Leu496 to His513 the chain is on the cytoplasmic side.

The protein belongs to the glycoside-pentoside-hexuronide (GPH) cation symporter transporter (TC 2.A.2.4) family. Expressed in flowers (at protein level). Highly expressed in pollen. Expressed in pollen tubes and root vascular cylinder, pericycle and endodermis.

It localises to the membrane. It carries out the reaction sucrose(out) + H(+)(out) = sucrose(in) + H(+)(in). It functions in the pathway glycan biosynthesis; sucrose metabolism. With respect to regulation, inhibited by DEPC, protonophores (e.g. dinitrophenol and carbonyl cyanide m-chlorophenyl-hydrazone (CCCP)), and SH group inhibitors (e.g. N-ethylmaleimide (NEM) and p-chloromercuriphenyl sulphonic acid (PCMPS)). In terms of biological role, responsible for the transport of sucrose into the cell, with the concomitant uptake of protons (symport system). This transport is both voltage- and energy-dependent. Can also transport other glucosides such as maltose, alpha-phenylglucoside and beta-phenylglucoside. May also transport biotin. Required for normal pollen germination and anthocyanin accumulation induced by sucrose. In Arabidopsis thaliana (Mouse-ear cress), this protein is Sucrose transport protein SUC1.